We begin with the raw amino-acid sequence, 265 residues long: 3-methyl-2-oxobutanoate hydroxymethyltransferase (265 aa).

Positions 45 and 84 each coordinate Mg(2+). Residues 45-46, Asp-84, and Lys-112 contribute to the 3-methyl-2-oxobutanoate site; that span reads DS. Glu-114 contributes to the Mg(2+) binding site. Glu-181 serves as the catalytic Proton acceptor.

This sequence belongs to the PanB family. In terms of assembly, homodecamer; pentamer of dimers. The cofactor is Mg(2+).

It localises to the cytoplasm. The catalysed reaction is 3-methyl-2-oxobutanoate + (6R)-5,10-methylene-5,6,7,8-tetrahydrofolate + H2O = 2-dehydropantoate + (6S)-5,6,7,8-tetrahydrofolate. Its pathway is cofactor biosynthesis; (R)-pantothenate biosynthesis; (R)-pantoate from 3-methyl-2-oxobutanoate: step 1/2. Functionally, catalyzes the reversible reaction in which hydroxymethyl group from 5,10-methylenetetrahydrofolate is transferred onto alpha-ketoisovalerate to form ketopantoate. The chain is 3-methyl-2-oxobutanoate hydroxymethyltransferase from Yersinia enterocolitica serotype O:8 / biotype 1B (strain NCTC 13174 / 8081).